A 66-amino-acid polypeptide reads, in one-letter code: Photosystem II reaction center protein J (66 aa).

A helical membrane pass occupies residues 37–57; sequence LWLVATAGGMAVLFVVGLFFY.

The protein belongs to the PsbJ family. PSII is composed of 1 copy each of membrane proteins PsbA, PsbB, PsbC, PsbD, PsbE, PsbF, PsbH, PsbI, PsbJ, PsbK, PsbL, PsbM, PsbT, PsbX, PsbY, PsbZ, Psb30/Ycf12, peripheral proteins PsbO, CyanoQ (PsbQ), PsbU, PsbV and a large number of cofactors. It forms dimeric complexes.

It is found in the cellular thylakoid membrane. One of the components of the core complex of photosystem II (PSII). PSII is a light-driven water:plastoquinone oxidoreductase that uses light energy to abstract electrons from H(2)O, generating O(2) and a proton gradient subsequently used for ATP formation. It consists of a core antenna complex that captures photons, and an electron transfer chain that converts photonic excitation into a charge separation. In Synechococcus sp. (strain WH7803), this protein is Photosystem II reaction center protein J.